A 276-amino-acid polypeptide reads, in one-letter code: Large ribosomal subunit protein uL2 (276 aa).

The interval 203–276 (NVSSGKAGRT…SDKFIVKRRK (74 aa)) is disordered. Basic residues predominate over residues 210–220 (GRTRWLGRRPQ). The span at 265 to 276 (KPSDKFIVKRRK) shows a compositional bias: basic and acidic residues.

It belongs to the universal ribosomal protein uL2 family. Part of the 50S ribosomal subunit. Forms a bridge to the 30S subunit in the 70S ribosome.

Functionally, one of the primary rRNA binding proteins. Required for association of the 30S and 50S subunits to form the 70S ribosome, for tRNA binding and peptide bond formation. It has been suggested to have peptidyltransferase activity; this is somewhat controversial. Makes several contacts with the 16S rRNA in the 70S ribosome. This is Large ribosomal subunit protein uL2 from Coprothermobacter proteolyticus (strain ATCC 35245 / DSM 5265 / OCM 4 / BT).